We begin with the raw amino-acid sequence, 311 residues long: MRGAARAAWGRAGQPWPRPPAPGPPPPPLPLLLLLLAGLLGGAGAQYSSDRCSWKGSGLTHEAHRKEVEQVYLRCAAGAVEWMYPTGALIVNLRPNTFSPARHLTVCIRSFTDSSGANIYLEKTGELRLLVPDGDGRPGRVQCFGLEQGGLFVEATPQQDIGRRTTGFQYELVRRHRASDLHELSAPCRPCSDTEVLLAVCTSDFAVRGSIQQVTHEPERQDSAIHLRVSRLYRQKSRVFEPVPEGDGHWQGRVRTLLECGVRPGHGDFLFTGHMHFGEARLGCAPRFKDFQRMYRDAQERGLNPCEVGTD.

Residues 1–13 show a composition bias toward low complexity; sequence MRGAARAAWGRAG. The segment at 1–24 is disordered; sequence MRGAARAAWGRAGQPWPRPPAPGP. The N-terminal stretch at 1-45 is a signal peptide; the sequence is MRGAARAAWGRAGQPWPRPPAPGPPPPPLPLLLLLLAGLLGGAGA. 5 cysteine pairs are disulfide-bonded: C52–C75, C107–C143, C188–C260, C191–C284, and C201–C306.

The protein belongs to the meteorin family. In terms of tissue distribution, highly expressed in the skeletal muscle, in subcutaneous adipose tissue, epididymal white adipose tissue depots and heart. Also expressed in brown adipose tissues and kidney.

Its subcellular location is the secreted. Hormone induced following exercise or cold exposure that promotes energy expenditure. Induced either in the skeletal muscle after exercise or in adipose tissue following cold exposure and is present in the circulation. Able to stimulate energy expenditure associated with the browning of the white fat depots and improves glucose tolerance. Does not promote an increase in a thermogenic gene program via direct action on adipocytes, but acts by stimulating several immune cell subtypes to enter the adipose tissue and activate their prothermogenic actions. Stimulates an eosinophil-dependent increase in IL4 expression and promotes alternative activation of adipose tissue macrophages, which are required for the increased expression of the thermogenic and anti-inflammatory gene programs in fat. Required for some cold-induced thermogenic responses, suggesting a role in metabolic adaptations to cold temperatures. This chain is Meteorin-like protein (METRNL), found in Homo sapiens (Human).